The sequence spans 735 residues: MIP-related peptides (735 aa).

Positions 1–20 are cleaved as a signal peptide; sequence MCTRPGLAALLVLMTSCASS. Positions 21 to 135 are excised as a propeptide; the sequence is FSRADTQSAS…EDSDTKVDTR (115 aa). Positions 33 to 65 are enriched in low complexity; the sequence is ALSAASADAQAARQQQEQHLVAQQQQQQQQQQQ. Disordered stretches follow at residues 33–212 and 229–251; these read ALSA…FGKK and FGKKSSGESAGDSGYISVASRGS. Polar residues-rich tracts occupy residues 66-76 and 101-125; these read HSNNNEPQQRA and PVSQPDLSPDFSNPMGSSLSQSGTP. 3 positions are modified to phenylalanine amide: F142, F153, and F164. The span at 142–159 shows a compositional bias: basic residues; that stretch reads FGKKRGQAPRFFGKKRAM. A propeptide spanning residues 168 to 184 is cleaved from the precursor; it reads SSEFPTSNSEQLALDTR. F190 is modified (phenylalanine amide). Residues 194–203 constitute a propeptide that is removed on maturation; it reads SFPESNREQR. Over residues 194–204 the composition is skewed to basic and acidic residues; the sequence is SFPESNREQRG. F209 and F229 each carry phenylalanine amide. Positions 214-229 are cleaved as a propeptide — linker peptide; that stretch reads FDENVDIDERAAPRFF. Positions 233–249 are excised as a propeptide; it reads SSGESAGDSGYISVASR. F255 carries the phenylalanine amide modification. A propeptide spans 259 to 267 (linker peptide); the sequence is QDDDIMIAA. F274 carries the post-translational modification Phenylalanine amide. Positions 279-287 are cleaved as a propeptide — linker peptide; the sequence is SDDNVALDL. F294 carries the post-translational modification Phenylalanine amide. A propeptide spanning residues 298–311 is cleaved from the precursor; it reads QSSDLDDEISVALR. Phenylalanine amide is present on F317. A propeptide spanning residues 321–332 is cleaved from the precursor; the sequence is RADDEDILLGER. Residue F338 is modified to Phenylalanine amide. The propeptide occupies 342–353; that stretch reads RANDENISFSLR. 2 disordered regions span residues 352–373 and 381–400; these read LRGSPRFFGKKRSDESDDDNIG and RFFGKKRSDETDDENIGLMA. Phenylalanine amide is present on F359. Residues 363-377 constitute a propeptide that is removed on maturation; sequence RSDESDDDNIGLVAR. F383 is subject to Phenylalanine amide. Residues 387 to 401 constitute a propeptide that is removed on maturation; it reads RSDETDDENIGLMAR. F407 bears the Phenylalanine amide mark. Positions 412–426 are cleaved as a propeptide — linker peptide; the sequence is SDGLDDGGNIIDVAT. Positions 430-464 are disordered; it reads PRFFGKKRSNSDSSDKSSDSALSSSESGRQTRQAP. F433 carries the post-translational modification Phenylalanine amide. Residues 437–461 constitute a propeptide that is removed on maturation; sequence RSNSDSSDKSSDSALSSSESGRQTR. The segment covering 438–447 has biased composition (basic and acidic residues); the sequence is SNSDSSDKSS. The residue at position 462 (Q462) is a Pyrrolidone carboxylic acid. Residue F467 is modified to Phenylalanine amide. Positions 471–493 are excised as a propeptide; sequence YVDEHHVSKRAAATAFPLIIEAR. The residue at position 494 (Q494) is a Pyrrolidone carboxylic acid. Residue F499 is modified to Phenylalanine amide. Positions 503 to 509 are excised as a propeptide; it reads EYRYPPR. I515 is subject to Isoleucine amide. The propeptide occupies 519 to 546; sequence FSLYRSPGKYSLSSPYMSAKEFKETFRR. A Methionine amide modification is found at M552. Residues 556–585 constitute a propeptide that is removed on maturation; sequence TAELNEEGSDDFTNDDTDDENEYDETVLFK. V592 bears the Valine amide mark. A Leucine amide modification is found at L601. Isoleucine amide is present on I610. The residue at position 619 (V619) is a Valine amide. Position 628 is an isoleucine amide (I628). A propeptide spans 632-661 (linker peptide); that stretch reads DLDWYQKALCAEADILELDDCADFLGNDDV. Q664 carries the pyrrolidone carboxylic acid modification. I669 bears the Isoleucine amide mark. Positions 674-705 are cleaved as a propeptide — linker peptide; the sequence is GEDVSERDYAQLLEALSRLQAIKQIKARIQNE. Position 714 is a valine amide (V714). The propeptide occupies 715–735; that stretch reads GRRSEYNLGPFDEFVDESMER.

Expressed in the CNS and peripheral tissues (the digestive tract, vasculature, and the reproductive organs).

It localises to the secreted. In terms of biological role, has some structural and functional features similar to vertebrate opioid peptides. AMRPs are inhibitory on Aplysia esophagus, penis retractor muscle, and body wall muscle. The protein is MIP-related peptides (MRP) of Aplysia californica (California sea hare).